The following is a 436-amino-acid chain: MFESKINPLWQSFILAVQEEVKPALGCTEPISLALAAAAAAAELDGTVERIDAWVSPNLMKNGMGVTVPGTGMVGLPIAAALGALGGDAKAGLEVLKDASAKAVADAKAMLAAGHVAVMLQEPCNDILFSRAKVYSGDSWACVTIVGDHTNIVRIETDKGVVFTQADNAQEEEKNSPLGVLSHTSLEEILAFVNAVPFDAIRFILDAARLNGALSQEGLRGSWGLHIGSTLAKQCDRGLLAKDLSTAILIRTSAASDARMGGATLPAMSNSGSGNQGITATVPVMVVAEHVGADDERLARALMLSHLSAIYIHYQLPRLSALCAATTAAMGAAAGMAWLIDGRYDTIAMAISSMIGDVSGMICDGASNSCAMKVSTSASAAWKAVLMALDDTAVTGNEGIVAHNVEQSIANLCSLACRSMQQTDKQIIEIMASKAH.

It belongs to the UPF0597 family.

This is UPF0597 protein YhaM from Salmonella paratyphi B (strain ATCC BAA-1250 / SPB7).